Consider the following 223-residue polypeptide: MKRTKSIHHASFRKSWSARHLTPVALAVTAVFMLAGCEKSDETVSLYQNADDCSAANPGKSAECTTAYNNALKEAERTAPKYATREDCVAEFGEGQCQQAPAQAGMAPENQAQAQQSSGSFWMPLMAGYMMGRLMGGGAGFAQQPLFSSKNPASPAYGKYTDAAGKNYGAAQPGRTMTVPKTAMAPKPATTTTVTRGGFGESVAKQSTMQRSAAGTSTRSMGG.

The segment covering 178-195 (TVPKTAMAPKPATTTTVT) has biased composition (low complexity). The interval 178–223 (TVPKTAMAPKPATTTTVTRGGFGESVAKQSTMQRSAAGTSTRSMGG) is disordered. Positions 204-223 (AKQSTMQRSAAGTSTRSMGG) are enriched in polar residues.

It belongs to the UPF0441 family.

This Salmonella paratyphi B (strain ATCC BAA-1250 / SPB7) protein is UPF0441 protein YgiB.